Consider the following 422-residue polypeptide: Isocitrate dehydrogenase [NADP] (422 aa).

Thr-94 serves as a coordination point for NADP(+). Residues Ser-103, Asn-105, Arg-109, Arg-119, and Arg-143 each coordinate D-threo-isocitrate. Asp-310 is a Mg(2+) binding site. NADP(+) contacts are provided by residues 344–350 (HGTAPKY), Asn-357, Tyr-396, and Arg-400.

It belongs to the isocitrate and isopropylmalate dehydrogenases family. Homodimer. Mg(2+) is required as a cofactor. The cofactor is Mn(2+).

The enzyme catalyses D-threo-isocitrate + NADP(+) = 2-oxoglutarate + CO2 + NADPH. Functionally, catalyzes the oxidative decarboxylation of isocitrate to 2-oxoglutarate and carbon dioxide with the concomitant reduction of NADP(+). The chain is Isocitrate dehydrogenase [NADP] (icd) from Staphylococcus aureus (strain MSSA476).